The following is a 329-amino-acid chain: Chlorophyllase-1, chloroplastic (329 aa).

A chloroplast-targeting transit peptide spans 1-21; that stretch reads MAAMVDAKPAASVQGTPLLAT. Positions 145-149 match the GXSXG motif; it reads GHSRG. Residue Ser-147 is the Nucleophile of the active site. Residues Asp-169 and His-242 each act as charge relay system in the active site.

Belongs to the AB hydrolase superfamily. Lipase family.

It localises to the plastid. Its subcellular location is the chloroplast. It carries out the reaction a chlorophyll + H2O = a chlorophyllide + phytol + H(+). The protein operates within porphyrin-containing compound metabolism; chlorophyll degradation. In terms of biological role, catalyzes the hydrolysis of ester bond in chlorophyll to yield chlorophyllide and phytol. The polypeptide is Chlorophyllase-1, chloroplastic (CHLASE1) (Citrus sinensis (Sweet orange)).